The primary structure comprises 94 residues: Phosphoribosyl-ATP pyrophosphatase (94 aa).

Belongs to the PRA-PH family.

The protein resides in the cytoplasm. It carries out the reaction 1-(5-phospho-beta-D-ribosyl)-ATP + H2O = 1-(5-phospho-beta-D-ribosyl)-5'-AMP + diphosphate + H(+). The protein operates within amino-acid biosynthesis; L-histidine biosynthesis; L-histidine from 5-phospho-alpha-D-ribose 1-diphosphate: step 2/9. The sequence is that of Phosphoribosyl-ATP pyrophosphatase from Pyrobaculum neutrophilum (strain DSM 2338 / JCM 9278 / NBRC 100436 / V24Sta) (Thermoproteus neutrophilus).